The sequence spans 35 residues: Malate dehydrogenase, mitochondrial (35 aa).

Residue N7 coordinates NAD(+). Residue R23 participates in substrate binding.

Belongs to the LDH/MDH superfamily. MDH type 1 family. As to quaternary structure, homodimer.

The protein localises to the mitochondrion matrix. It carries out the reaction (S)-malate + NAD(+) = oxaloacetate + NADH + H(+). This chain is Malate dehydrogenase, mitochondrial, found in Capsicum annuum var. annuum (Red pepper).